The primary structure comprises 487 residues: Histamine H1 receptor (487 aa).

Over 1-29 (MSLPNSSCLLEDKMCEGNKTTMASPQLMP) the chain is Extracellular. N-linked (GlcNAc...) asparagine glycans are attached at residues Asn-5 and Asn-18. A helical transmembrane segment spans residues 30–50 (LVVVLSTICLVTVGLNLLVLY). At 51-64 (AVRSERKLHTVGNL) the chain is on the cytoplasmic side. A helical membrane pass occupies residues 65 to 89 (YIVSLSVADLIVGAVVMPMNILYLL). Residues 90 to 97 (MSKWSLGR) lie on the Extracellular side of the membrane. The helical transmembrane segment at 98-123 (PLCLFWLSMDYVASTASIFSVFILCI) threads the bilayer. Cysteines 100 and 180 form a disulfide. Asp-107 and Thr-112 together coordinate histamine. The tract at residues 107 to 112 (DYVAST) is important for agonist binding. The Cytoplasmic portion of the chain corresponds to 124 to 144 (DRYRSVQQPLRYLKYRTKTRA). 2 positions are modified to phosphothreonine: Thr-140 and Thr-142. A helical membrane pass occupies residues 145-164 (SATILGAWFLSFLWVIPILG). Residues 165-188 (WNHFMQQTSVRREDKCETDFYDVT) are Extracellular-facing. A helical membrane pass occupies residues 189–211 (WFKVMTAIINFYLPTLLMLWFYA). Asn-198 serves as a coordination point for histamine. The Cytoplasmic portion of the chain corresponds to 212–416 (KIYKAVRQHC…MNRERKAAKQ (205 aa)). Phosphoserine is present on Ser-230. Over residues 238 to 261 (KLRPENPKGDAKKPGKESPWEVLK) the composition is skewed to basic and acidic residues. The disordered stretch occupies residues 238–291 (KLRPENPKGDAKKPGKESPWEVLKRKPKDAGGGSVLKSPSQTPKEMKSPVVFSQ). Residue Thr-279 is modified to Phosphothreonine. Ser-344 and Ser-347 each carry phosphoserine. The tract at residues 345–379 (EISEDQMLGDSQSFSRTDSDTTTETAPGKGKLRSG) is disordered. A compositionally biased stretch (polar residues) spans 353 to 369 (GDSQSFSRTDSDTTTET). 3 positions are modified to phosphoserine: Ser-380, Ser-396, and Ser-398. A helical transmembrane segment spans residues 417–440 (LGFIMAAFILCWIPYFIFFMVIAF). An important for agonist binding region spans residues 424–428 (FILCW). A histamine-binding site is contributed by Tyr-431. An intrachain disulfide couples Cys-441 to Cys-444. Over 441–446 (CKNCCN) the chain is Extracellular. Residues 447 to 469 (EHLHMFTIWLGYINSTLNPLIYP) traverse the membrane as a helical segment. Topologically, residues 470-487 (LCNENFKKTFKRILHIRS) are cytoplasmic.

It belongs to the G-protein coupled receptor 1 family. Post-translationally, phosphorylation at sites in the second and third cytoplasmic loops independently contribute to agonist-induced receptor down-regulation.

The protein resides in the cell membrane. In terms of biological role, G-protein-coupled receptor for histamine, a biogenic amine that functions as an immune modulator and a neurotransmitter. Through the H1 receptor, histamine mediates the contraction of smooth muscles and increases capillary permeability due to contraction of terminal venules. Also mediates neurotransmission in the central nervous system and thereby regulates circadian rhythms, emotional and locomotor activities as well as cognitive functions. The chain is Histamine H1 receptor from Homo sapiens (Human).